A 180-amino-acid polypeptide reads, in one-letter code: UDP-4-amino-4,6-dideoxy-N-acetyl-beta-L-altrosamine N-acetyltransferase (180 aa).

The N-acetyltransferase domain occupies 13–169 (IDFTNLNDGE…IDVLLYYKDK (157 aa)).

The enzyme catalyses UDP-4-amino-4,6-dideoxy-N-acetyl-beta-L-altrosamine + acetyl-CoA = UDP-2,4-diacetamido-2,4,6-trideoxy-beta-L-altrose + CoA + H(+). In terms of biological role, catalyzes the third step in the biosynthesis of pseudaminic acid, a sialic-acid-like sugar that is used to modify flagellin. Mediates N-4 acetylation of UDP-4-amino-4,6-dideoxy-beta-L-AltNAc to form UDP-2,4-diacetamido-2,4,6-trideoxy-beta-L-altropyranose. The sequence is that of UDP-4-amino-4,6-dideoxy-N-acetyl-beta-L-altrosamine N-acetyltransferase (pseH) from Helicobacter pylori (strain ATCC 700392 / 26695) (Campylobacter pylori).